We begin with the raw amino-acid sequence, 141 residues long: Transmembrane protein 216 (141 aa).

4 helical membrane-spanning segments follow: residues 15–35, 49–69, 82–102, and 115–135; these read ILFF…LFIF, LVLD…RLFF, LGIS…YLLL, and SILL…LTAF.

Part of the tectonic-like complex (also named B9 complex). Interacts with TMEM107.

Its subcellular location is the membrane. It is found in the cytoplasm. The protein resides in the cytoskeleton. It localises to the cilium basal body. Its function is as follows. Part of the tectonic-like complex which is required for tissue-specific ciliogenesis and may regulate ciliary membrane composition. The chain is Transmembrane protein 216 (TMEM216) from Bos taurus (Bovine).